The chain runs to 164 residues: Putative 4-hydroxy-4-methyl-2-oxoglutarate aldolase (164 aa).

Substrate contacts are provided by residues 80 to 83 and arginine 102; that span reads GGNL. Aspartate 103 contacts a divalent metal cation.

It belongs to the class II aldolase/RraA-like family. Homotrimer. A divalent metal cation is required as a cofactor.

It carries out the reaction 4-hydroxy-4-methyl-2-oxoglutarate = 2 pyruvate. It catalyses the reaction oxaloacetate + H(+) = pyruvate + CO2. Functionally, catalyzes the aldol cleavage of 4-hydroxy-4-methyl-2-oxoglutarate (HMG) into 2 molecules of pyruvate. Also contains a secondary oxaloacetate (OAA) decarboxylase activity due to the common pyruvate enolate transition state formed following C-C bond cleavage in the retro-aldol and decarboxylation reactions. The chain is Putative 4-hydroxy-4-methyl-2-oxoglutarate aldolase from Paraburkholderia phymatum (strain DSM 17167 / CIP 108236 / LMG 21445 / STM815) (Burkholderia phymatum).